The sequence spans 1213 residues: Formin (1213 aa).

Disordered stretches follow at residues 1–24 (MEGGNAGCSRQLPERAGPAESEPD), 66–111 (QANN…EPEP), 144–169 (VHTTSDTESDGESKDPDADETGTSKC), 183–216 (GNNQSKEESDSEGYGHSDDTVGRDDTELHPPISQ), and 357–489 (DVSK…PKAN). 2 stretches are compositionally biased toward basic and acidic residues: residues 187 to 210 (SKEESDSEGYGHSDDTVGRDDTEL) and 431 to 464 (EAIKRKMRNEKESLKAVFERSKSKPGDGPSDKSP). 2 coiled-coil regions span residues 428–450 (SELEAIKRKMRNEKESLKAVFER) and 503–572 (EYQA…IGVS). The tract at residues 624-774 (ISTQGENKDS…PRKPAIEPSR (151 aa)) is disordered. Polar residues predominate over residues 636 to 647 (VPSSESVLSCQP). 3 stretches are compositionally biased toward pro residues: residues 650–672 (MLPPSPPPPPPPPPPPPPPPPPF), 680–689 (LVPPPPPLPT), and 718–751 (PAPPAPPPLPGLGPPVPPPLPGSGLPPPPPPPGP). An FH1 domain is found at 652–751 (PPSPPPPPPP…LPPPPPPPGP (100 aa)). The span at 755–764 (FNSTLSSSQG) shows a compositional bias: polar residues. Residues 766-1182 (RKPAIEPSRP…KVAQQSVSKL (417 aa)) form the FH2 domain. Residues 1050-1125 (FQASQVKFED…ENAQKCFEET (76 aa)) adopt a coiled-coil conformation. A disordered region spans residues 1193-1213 (INPTASLKERLRQKEANVNAN).

This sequence belongs to the formin homology family. Cappuccino subfamily. In terms of tissue distribution, present in the adult brain, kidney, brain, heart and intestine and throughout the embryo.

The protein resides in the nucleus. Functionally, is important for morphogenesis of limb and kidney and may be involved in determining dorsoventral neural tube polarity and motor neuron induction. It may also have a function in differentiated cells or be involved in maintaining specific differentiated states. The chain is Formin (LD) from Gallus gallus (Chicken).